Consider the following 1031-residue polypeptide: Beta-galactosidase (1031 aa).

Substrate-binding residues include asparagine 98 and aspartate 197. Residue aspartate 197 participates in Na(+) binding. Mg(2+) is bound by residues glutamate 412, histidine 414, and glutamate 457. Residues glutamate 457 and 533 to 536 (EYAH) contribute to the substrate site. Glutamate 457 acts as the Proton donor in catalysis. Glutamate 533 serves as the catalytic Nucleophile. Asparagine 593 is a Mg(2+) binding site. 2 residues coordinate Na(+): phenylalanine 597 and aspartate 600. Substrate contacts are provided by aspartate 600 and tryptophan 1005.

It belongs to the glycosyl hydrolase 2 family. Homotetramer. The cofactor is Mg(2+). Na(+) is required as a cofactor.

It carries out the reaction Hydrolysis of terminal non-reducing beta-D-galactose residues in beta-D-galactosides.. In Oenococcus oeni (strain ATCC BAA-331 / PSU-1), this protein is Beta-galactosidase.